A 429-amino-acid chain; its full sequence is Probable exoglucanase GH6D (429 aa).

Residues 1–17 form the signal peptide; that stretch reads MRAVYAILAGLLATGSA. Substrate-binding residues include tryptophan 75 and serine 77. Active-site proton donor residues include aspartate 115 and aspartate 162. 2 residues coordinate substrate: asparagine 206 and tryptophan 209. The N-linked (GlcNAc...) asparagine glycan is linked to asparagine 237. Residues asparagine 240, tryptophan 300, lysine 328, and glutamate 332 each coordinate substrate. Residues 240-261 form a disordered region; it reads NYNPYSTNNPPPYTAGSPSADE. Positions 362-390 are disordered; the sequence is PEIRADGGGGGSPAPGPSSTAVAPSPSAT. Positions 378 to 390 are enriched in low complexity; it reads PSSTAVAPSPSAT. The 36-residue stretch at 394-429 folds into the CBM1 domain; the sequence is NCAARWAQCGGQGWTGPTCCAQGTCQASNQWYSQCL.

It belongs to the glycosyl hydrolase 6 (cellulase B) family.

It localises to the secreted. Functionally, probable exoglucanase that may play an important function in biomass degradation by catalyzing the hydrolysis of cellulose. The sequence is that of Probable exoglucanase GH6D from Podospora anserina (strain S / ATCC MYA-4624 / DSM 980 / FGSC 10383) (Pleurage anserina).